Reading from the N-terminus, the 457-residue chain is MGLVEVVWWWRWRFGGGGGGLVVEVEVWWWRWRFGGGGCIMLEIEEERSQCPAEITEDNQTSGCRRQWDNITCWPEAQVGAVVVKPCPKYFRLLTTFLGNVSRNCTSQGWTDVYPAPYAVACGYDSTAHQGKEQTAFYGTVKTGYTIGHTLSLIALTAAMIILCLFRKLHCTRNYIHMHLFMSFIMRAIAVFIKDVTLFESGEPEHCFVSSVGCKAMMVFFQYCVMANFFWLLVEGLYLHTLLVISFFSERKYFWWYILIGWGAPSVFITAWTVVRIYFFNVGCWEEIIESPIWWIIKTPILVSILVNFILFICIIRILVQKLHSPDVGHNETSQYSRLAKSTLLLIPLFGIHYIMFAFFPDNFKAQVKLVFELVVGSFQGFVVAVLYCFLNGEVQAELKRKWRRWHLERFLGSDMKYHHPSLGSNGTNFSTQISMLTKCSPKTRRCSSFQAEFSLV.

The first 19 residues, 1 to 19 (MGLVEVVWWWRWRFGGGGG), serve as a signal peptide directing secretion. Topologically, residues 20–141 (GLVVEVEVWW…KEQTAFYGTV (122 aa)) are extracellular. 3 cysteine pairs are disulfide-bonded: Cys51–Cys73, Cys64–Cys105, and Cys87–Cys122. Residues Asn59, Asn70, Asn100, and Asn104 are each glycosylated (N-linked (GlcNAc...) asparagine). The helical transmembrane segment at 142-166 (KTGYTIGHTLSLIALTAAMIILCLF) threads the bilayer. The Cytoplasmic segment spans residues 167–173 (RKLHCTR). A helical transmembrane segment spans residues 174-193 (NYIHMHLFMSFIMRAIAVFI). At 194 to 215 (KDVTLFESGEPEHCFVSSVGCK) the chain is on the extracellular side. Residues Cys214 and Cys284 are joined by a disulfide bond. The helical transmembrane segment at 216–239 (AMMVFFQYCVMANFFWLLVEGLYL) threads the bilayer. Topologically, residues 240-253 (HTLLVISFFSERKY) are cytoplasmic. The chain crosses the membrane as a helical span at residues 254-275 (FWWYILIGWGAPSVFITAWTVV). Residues 276–292 (RIYFFNVGCWEEIIESP) lie on the Extracellular side of the membrane. Residues 293-316 (IWWIIKTPILVSILVNFILFICII) form a helical membrane-spanning segment. Residues 317 to 341 (RILVQKLHSPDVGHNETSQYSRLAK) are Cytoplasmic-facing. The chain crosses the membrane as a helical span at residues 342–361 (STLLLIPLFGIHYIMFAFFP). The Extracellular portion of the chain corresponds to 362–373 (DNFKAQVKLVFE). A helical membrane pass occupies residues 374–393 (LVVGSFQGFVVAVLYCFLNG). The Cytoplasmic segment spans residues 394–457 (EVQAELKRKW…SSFQAEFSLV (64 aa)).

It belongs to the G-protein coupled receptor 2 family. In terms of tissue distribution, expressed in pituitary, hypothalamus, small intestine and ovarian follicles.

It localises to the cell membrane. This is a receptor for VIP. The activity of this receptor is mediated by G proteins which activate adenylyl cyclase. The chain is Vasoactive intestinal polypeptide receptor (VIPR1) from Meleagris gallopavo (Wild turkey).